The following is a 107-amino-acid chain: Guanine nucleotide-binding protein G(I)/G(S)/G(O) subunit gamma-14 (107 aa).

Positions 69–107 (KMAADLLKFCTEQAKNDPFLVGIPAATNSFKEKKPYAIL) constitute a G protein gamma domain.

This sequence belongs to the G protein gamma family. As to quaternary structure, g proteins are composed of 3 units; alpha, beta and gamma.

The protein resides in the cell membrane. Functionally, guanine nucleotide-binding proteins (G proteins) are involved as a modulator or transducer in various transmembrane signaling systems. The beta and gamma chains are required for the GTPase activity, for replacement of GDP by GTP, and for G protein-effector interaction. This is Guanine nucleotide-binding protein G(I)/G(S)/G(O) subunit gamma-14 from Homo sapiens (Human).